A 598-amino-acid chain; its full sequence is MQHIRNFSIIAHIDHGKSTLADRLIHFCGGLSDREMEAQVLDSMDLERERGITIKAQTAALHYKAKDGQVYNLNLIDTPGHVDFSYEVSRSLSACEGALLVVDASQGVEAQTVANCYTAIEQNVEVVPVLNKIDLPAADPESARKEIEDVIGVDASEAVLCSAKTGLGIEDVLETVVRRVPPPKGDPDAPLKALIIDSWFDNYVGVVMLVRVVDGVLKPKDRILLMANGAQYPCDQVGVFTPRSVARPQLSAGEVGFIIAGIKELQAAKVGDTVTLAMRPASEPLPGFKEIKPQVFAGLYPVESSEYDQLRDSLEKLRLNDASLQYEPEVSQALGFGFRCGFLGLLHMDIVQERLEREFDMNLITTAPTVVYEVVMNSGEVIRVENPAKLPDQSKIAEIREPIITATIFLPQDYVGPVITLCNLKRGAQVDMRYHGRQVQLIYDLPMNEVVMDFFDKLKSVSRGYASLDYEFKEYRAADLVKLDLLVGGEKVDALSVIVHRASAQYRGREVAAKLRGLIPRQMFDVAIQSAIGSHIVARETIKALRKNVLAKCYGGDISRKKKLLEKQKEGKKRMKQVGNVEIPQEAFLAVLRVDEGK.

A tr-type G domain is found at 2 to 184 (QHIRNFSIIA…TVVRRVPPPK (183 aa)). GTP-binding positions include 14-19 (DHGKST) and 131-134 (NKID).

The protein belongs to the TRAFAC class translation factor GTPase superfamily. Classic translation factor GTPase family. LepA subfamily.

It localises to the cell inner membrane. It carries out the reaction GTP + H2O = GDP + phosphate + H(+). Required for accurate and efficient protein synthesis under certain stress conditions. May act as a fidelity factor of the translation reaction, by catalyzing a one-codon backward translocation of tRNAs on improperly translocated ribosomes. Back-translocation proceeds from a post-translocation (POST) complex to a pre-translocation (PRE) complex, thus giving elongation factor G a second chance to translocate the tRNAs correctly. Binds to ribosomes in a GTP-dependent manner. The chain is Elongation factor 4 from Aromatoleum aromaticum (strain DSM 19018 / LMG 30748 / EbN1) (Azoarcus sp. (strain EbN1)).